The primary structure comprises 360 residues: MPKKILFTGGGTVGHVTLNLILIPKFIKDGWEVHYIGDKNGIEHTEIEKSGLDVTFHAIATGKLRRYFSWQNLADVFKVALGLLQSLFIVAKLRPQALFSKGGFVSVPPVVAAKLLGKPVFIHESDRSMGLANKIAYKFATTVYTTFEQEDQLSKVKHLGAVTKVFKDANQIPESTQLEAVKEYFSRDLKTLLFIGGSAGAHVFNQFISDHPELKQRYNIINITGDPHLNELSSHLYRVDYVTDLYQPLMAMADLVVTRGGSNTLFELLAMAKLHLIVPLGKEASRGDQLENATYFEKRGYAKQLQEPDLTLHNFDQAMADLFEHQADYEATMLATKEIQSPDFFYDLLRADISSAIKEK.

Positions 198 and 289 each coordinate UDP-N-acetyl-alpha-D-glucosamine.

Belongs to the glycosyltransferase 28 family. MurG subfamily.

The protein resides in the cell membrane. The enzyme catalyses Mur2Ac(oyl-L-Ala-gamma-D-Glu-L-Lys-D-Ala-D-Ala)-di-trans,octa-cis-undecaprenyl diphosphate + UDP-N-acetyl-alpha-D-glucosamine = beta-D-GlcNAc-(1-&gt;4)-Mur2Ac(oyl-L-Ala-gamma-D-Glu-L-Lys-D-Ala-D-Ala)-di-trans,octa-cis-undecaprenyl diphosphate + UDP + H(+). It participates in cell wall biogenesis; peptidoglycan biosynthesis. Its function is as follows. Cell wall formation. Catalyzes the transfer of a GlcNAc subunit on undecaprenyl-pyrophosphoryl-MurNAc-pentapeptide (lipid intermediate I) to form undecaprenyl-pyrophosphoryl-MurNAc-(pentapeptide)GlcNAc (lipid intermediate II). In Streptococcus pyogenes serotype M5 (strain Manfredo), this protein is UDP-N-acetylglucosamine--N-acetylmuramyl-(pentapeptide) pyrophosphoryl-undecaprenol N-acetylglucosamine transferase.